The following is a 566-amino-acid chain: MTKYVFVTGGVVSSLGKGIAAASLAAILETRGIKVTLLKLDPYINVDPGTMSPFQHGEVFVTEDGAETDLDLGHYERFISGKMTRRNNFTTGQIYESVIKKERRGDYLGGTVQVIPHITDEIKHYIRVGAGDAQVAIVEIGGTVGDIESLPFLEAIRQMAVQLPREDTCFIHLTLLPYITSAGELKTKPTQHSVKELREIGIQPDVLLCRADRALPADERRKIALFTNVREEAVILALDVDSIYKIPSLLHDQMLDEIVCHKLNLLAKAADLSTWKKLVHALEHPERVIEIALVGKYVDLTESYKSLSEALIHAGIHTRSKINIHYVDSESIEKDGTGCLDGMDAILVPGGFGKRGVEGKIMAIHFARTNRIPYLGICLGMQLAVIEYARNKAGMQGAHSTEFHPETAYPVIALTIEWRSREGQLEIRTADSDLGGTMRLGGQECLLKEGSLARRIYGSDKIIERHRHRYEVNNQYIPRLEQAGMSISAVSAGEGLCEMVELPQTEHPWFVASQFHPEFTSTPRAGHPLFAAFIEAAAVFADKSPSSEGAISADKPERTTTGAYIQ.

The tract at residues 1–265 (MTKYVFVTGG…DEIVCHKLNL (265 aa)) is amidoligase domain. S13 serves as a coordination point for CTP. S13 provides a ligand contact to UTP. Residues 14 to 19 (SLGKGI) and D71 contribute to the ATP site. D71 and E139 together coordinate Mg(2+). CTP contacts are provided by residues 146 to 148 (DIE), 186 to 191 (KTKPTQ), and K222. UTP-binding positions include 186–191 (KTKPTQ) and K222. A Glutamine amidotransferase type-1 domain is found at 290–543 (EIALVGKYVD…IEAAAVFADK (254 aa)). G351 is an L-glutamine binding site. C378 acts as the Nucleophile; for glutamine hydrolysis in catalysis. L-glutamine is bound by residues 379–382 (LGMQ), E402, and R469. Active-site residues include H516 and E518. The segment at 545–566 (PSSEGAISADKPERTTTGAYIQ) is disordered.

The protein belongs to the CTP synthase family. In terms of assembly, homotetramer.

The catalysed reaction is UTP + L-glutamine + ATP + H2O = CTP + L-glutamate + ADP + phosphate + 2 H(+). The enzyme catalyses L-glutamine + H2O = L-glutamate + NH4(+). It carries out the reaction UTP + NH4(+) + ATP = CTP + ADP + phosphate + 2 H(+). Its pathway is pyrimidine metabolism; CTP biosynthesis via de novo pathway; CTP from UDP: step 2/2. Its activity is regulated as follows. Allosterically activated by GTP, when glutamine is the substrate; GTP has no effect on the reaction when ammonia is the substrate. The allosteric effector GTP functions by stabilizing the protein conformation that binds the tetrahedral intermediate(s) formed during glutamine hydrolysis. Inhibited by the product CTP, via allosteric rather than competitive inhibition. Its function is as follows. Catalyzes the ATP-dependent amination of UTP to CTP with either L-glutamine or ammonia as the source of nitrogen. Regulates intracellular CTP levels through interactions with the four ribonucleotide triphosphates. The polypeptide is CTP synthase (Nitrosospira multiformis (strain ATCC 25196 / NCIMB 11849 / C 71)).